Consider the following 336-residue polypeptide: tRNA N6-adenosine threonylcarbamoyltransferase (336 aa).

2 residues coordinate Fe cation: H112 and H116. Substrate-binding positions include 136-140 (LVSGG), D169, G182, and N276. D304 contributes to the Fe cation binding site.

The protein belongs to the KAE1 / TsaD family. The cofactor is Fe(2+).

The protein resides in the cytoplasm. It catalyses the reaction L-threonylcarbamoyladenylate + adenosine(37) in tRNA = N(6)-L-threonylcarbamoyladenosine(37) in tRNA + AMP + H(+). Required for the formation of a threonylcarbamoyl group on adenosine at position 37 (t(6)A37) in tRNAs that read codons beginning with adenine. Is involved in the transfer of the threonylcarbamoyl moiety of threonylcarbamoyl-AMP (TC-AMP) to the N6 group of A37, together with TsaE and TsaB. TsaD likely plays a direct catalytic role in this reaction. The polypeptide is tRNA N6-adenosine threonylcarbamoyltransferase (Francisella philomiragia subsp. philomiragia (strain ATCC 25017 / CCUG 19701 / FSC 153 / O#319-036)).